The following is a 219-amino-acid chain: Probable GTP-binding protein EngB (219 aa).

Residues 24–207 (VQPEVAFAGR…HALIESWVRP (184 aa)) enclose the EngB-type G domain. GTP is bound by residues 32–39 (GRSNAGKS), 59–63 (GRTQH), 81–84 (DLPG), 148–151 (TKCD), and 185–188 (LFSA). Mg(2+)-binding residues include serine 39 and threonine 61.

It belongs to the TRAFAC class TrmE-Era-EngA-EngB-Septin-like GTPase superfamily. EngB GTPase family. Requires Mg(2+) as cofactor.

In terms of biological role, necessary for normal cell division and for the maintenance of normal septation. The protein is Probable GTP-binding protein EngB of Burkholderia mallei (strain ATCC 23344).